The chain runs to 211 residues: tRNA (guanine-N(7)-)-methyltransferase (211 aa).

S-adenosyl-L-methionine is bound by residues E43, E68, D95, and D117. Residue D117 is part of the active site. Substrate contacts are provided by residues K121, D153, and 190–193 (TEYE).

This sequence belongs to the class I-like SAM-binding methyltransferase superfamily. TrmB family.

The enzyme catalyses guanosine(46) in tRNA + S-adenosyl-L-methionine = N(7)-methylguanosine(46) in tRNA + S-adenosyl-L-homocysteine. It functions in the pathway tRNA modification; N(7)-methylguanine-tRNA biosynthesis. Its function is as follows. Catalyzes the formation of N(7)-methylguanine at position 46 (m7G46) in tRNA. In Staphylococcus carnosus (strain TM300), this protein is tRNA (guanine-N(7)-)-methyltransferase.